A 339-amino-acid chain; its full sequence is Serine/threonine-protein kinase SAPK2 (339 aa).

Positions 4–260 (YEVIKDIGSG…IPEIKNHPWF (257 aa)) constitute a Protein kinase domain. Residues 10 to 18 (IGSGNFGVA) and Lys33 each bind ATP. Asp123 functions as the Proton acceptor in the catalytic mechanism. The tract at residues 253–339 (EIKNHPWFLK…EDSGDFVCAL (87 aa)) is C-terminal.

Belongs to the protein kinase superfamily. Ser/Thr protein kinase family. Interacts with BZIP46. Interacts with ABI5 and PP2C30. Interacts with PP2C51. Phosphorylated. Expressed in leaf blades, leaf sheaths and roots. Expressed in shoots and roots of young seedlings.

The protein localises to the cytoplasm. The protein resides in the nucleus. The catalysed reaction is L-seryl-[protein] + ATP = O-phospho-L-seryl-[protein] + ADP + H(+). It catalyses the reaction L-threonyl-[protein] + ATP = O-phospho-L-threonyl-[protein] + ADP + H(+). Its activity is regulated as follows. Activated by phosphorylation in response to hyperosmotic stress within 5 minutes. Functionally, may play a role in signal transduction of hyperosmotic response. Can phosphorylate BZIP46 in vitro. Together with ABI5, PP2C30 and PYL5, is part of an abscisic acid (ABA) signaling unit that modulates seed germination and early seedling growth. The sequence is that of Serine/threonine-protein kinase SAPK2 (SAPK2) from Oryza sativa subsp. japonica (Rice).